Consider the following 1165-residue polypeptide: Pesticidal crystal protein Cry1Da (1165 aa).

The protein belongs to the delta endotoxin family.

Promotes colloidosmotic lysis by binding to the midgut epithelial cells of many lepidopteran larvae. The chain is Pesticidal crystal protein Cry1Da (cry1Da) from Bacillus thuringiensis subsp. aizawai.